The sequence spans 271 residues: Glutamate racemase (271 aa).

Residues 10–11 and 42–43 each bind substrate; these read DS and YG. Catalysis depends on Cys73, which acts as the Proton donor/acceptor. 74 to 75 is a binding site for substrate; that stretch reads NT. Cys183 functions as the Proton donor/acceptor in the catalytic mechanism. 184–185 serves as a coordination point for substrate; that stretch reads TH.

It belongs to the aspartate/glutamate racemases family.

It carries out the reaction L-glutamate = D-glutamate. The protein operates within cell wall biogenesis; peptidoglycan biosynthesis. In terms of biological role, provides the (R)-glutamate required for cell wall biosynthesis. The polypeptide is Glutamate racemase (Lactococcus lactis subsp. cremoris (strain SK11)).